We begin with the raw amino-acid sequence, 524 residues long: MDTESTYSGYSYYSSHSKKSHRQGERTRERHKSPRNKDGRGSEKSVTIQPPTGEPLLGNDSTRTEEVQDDNWGETTTAITGTSEHSISQEDIARISKDMEDSVGLDCKRYLGLTVASFLGLLVFLTPIAFILLPPILWRDELEPCGTICEGLFISMAFKLLILLIGTWALFFRKRRADMPRVFVFRALLLVLIFLFVVSYWLFYGVRILDSRDRNYQGIVQYAVSLVDALLFIHYLAIVLLELRQLQPMFTLQVVRSTDGESRFYSLGHLSIQRAALVVLENYYKDFTIYNPNLLTASKFRAAKHMAGLKVYNVDGPSNNATGQSRAMIAAAARRRDSSHNELYYEEAEHERRVKKRKARLVVAVEEAFIHIQRLQAEEQQKAPGEVMDPREAAQAIFPSMARALQKYLRITRQQNYHSMESILQHLAFCITNGMTPKAFLERYLSAGPTLQYDKDRWLSTQWRLVSDEAVTNGLRDGIVFVLKCLDFSLVVNVKKIPFIILSEEFIDPKSHKFVLRLQSETSV.

A compositionally biased stretch (low complexity) spans 1-15 (MDTESTYSGYSYYSS). The interval 1 to 85 (MDTESTYSGY…TTAITGTSEH (85 aa)) is disordered. At 1–117 (MDTESTYSGY…KRYLGLTVAS (117 aa)) the chain is on the cytoplasmic side. The span at 73–85 (GETTTAITGTSEH) shows a compositional bias: polar residues. Residues Ser86 and Ser88 each carry the phosphoserine modification. A helical membrane pass occupies residues 118 to 138 (FLGLLVFLTPIAFILLPPILW). At 139–151 (RDELEPCGTICEG) the chain is on the extracellular side. The helical transmembrane segment at 152–172 (LFISMAFKLLILLIGTWALFF) threads the bilayer. The Cytoplasmic segment spans residues 173–182 (RKRRADMPRV). The chain crosses the membrane as a helical span at residues 183–203 (FVFRALLLVLIFLFVVSYWLF). Over 204-222 (YGVRILDSRDRNYQGIVQY) the chain is Extracellular. Residues 223–243 (AVSLVDALLFIHYLAIVLLEL) form a helical membrane-spanning segment. The Cytoplasmic portion of the chain corresponds to 244 to 524 (RQLQPMFTLQ…VLRLQSETSV (281 aa)).

The protein belongs to the Vang family. In terms of assembly, heterodimer with VANGL2. Interacts through its C-terminal region with the N-terminal half of DVL1, DVL2 and DVL3. The PDZ domain of DVL1, DVL2 and DVL3 is required for the interaction. In terms of tissue distribution, according to PubMed:11956595, ubiquitously expressed. According to PubMed:12011995, expressed specifically in testis and ovary.

The protein resides in the cell membrane. The chain is Vang-like protein 1 (VANGL1) from Homo sapiens (Human).